The following is a 92-amino-acid chain: Co-chaperonin GroES (92 aa).

It belongs to the GroES chaperonin family. As to quaternary structure, heptamer of 7 subunits arranged in a ring. Interacts with the chaperonin GroEL.

Its subcellular location is the cytoplasm. Its function is as follows. Together with the chaperonin GroEL, plays an essential role in assisting protein folding. The GroEL-GroES system forms a nano-cage that allows encapsulation of the non-native substrate proteins and provides a physical environment optimized to promote and accelerate protein folding. GroES binds to the apical surface of the GroEL ring, thereby capping the opening of the GroEL channel. The sequence is that of Co-chaperonin GroES from Methanosarcina barkeri (strain Fusaro / DSM 804).